The primary structure comprises 283 residues: Bifunctional protein FolD (283 aa).

NADP(+)-binding positions include 165–167, Ser190, and Val231; that span reads GRS.

This sequence belongs to the tetrahydrofolate dehydrogenase/cyclohydrolase family. In terms of assembly, homodimer. Interacts with BrxC.

The enzyme catalyses (6R)-5,10-methylene-5,6,7,8-tetrahydrofolate + NADP(+) = (6R)-5,10-methenyltetrahydrofolate + NADPH. It carries out the reaction (6R)-5,10-methenyltetrahydrofolate + H2O = (6R)-10-formyltetrahydrofolate + H(+). The protein operates within one-carbon metabolism; tetrahydrofolate interconversion. Functionally, catalyzes the oxidation of 5,10-methylenetetrahydrofolate to 5,10-methenyltetrahydrofolate and then the hydrolysis of 5,10-methenyltetrahydrofolate to 10-formyltetrahydrofolate. The protein is Bifunctional protein FolD of Bacillus subtilis (strain 168).